A 493-amino-acid polypeptide reads, in one-letter code: uncharacterized protein (493 aa).

S328 carries the phosphoserine modification. Positions 466–486 (AESNSGRGQNSKTKTTSVNLS) are enriched in polar residues. A disordered region spans residues 466-493 (AESNSGRGQNSKTKTTSVNLSRNKRTRT).

This is an uncharacterized protein from Schizosaccharomyces pombe (strain 972 / ATCC 24843) (Fission yeast).